The chain runs to 274 residues: Formamidopyrimidine-DNA glycosylase (274 aa).

Residue proline 2 is the Schiff-base intermediate with DNA of the active site. The active-site Proton donor is glutamate 3. The active-site Proton donor; for beta-elimination activity is the lysine 58. The DNA site is built by histidine 92 and arginine 111. The FPG-type; degenerate zinc finger occupies 239 to 273 (HVYGREGEPCERCGTIIEKIKVAQRGTHFCPLEQR). Arginine 263 functions as the Proton donor; for delta-elimination activity in the catalytic mechanism.

The protein belongs to the FPG family. As to quaternary structure, monomer. It depends on Zn(2+) as a cofactor.

It catalyses the reaction Hydrolysis of DNA containing ring-opened 7-methylguanine residues, releasing 2,6-diamino-4-hydroxy-5-(N-methyl)formamidopyrimidine.. The catalysed reaction is 2'-deoxyribonucleotide-(2'-deoxyribose 5'-phosphate)-2'-deoxyribonucleotide-DNA = a 3'-end 2'-deoxyribonucleotide-(2,3-dehydro-2,3-deoxyribose 5'-phosphate)-DNA + a 5'-end 5'-phospho-2'-deoxyribonucleoside-DNA + H(+). In terms of biological role, involved in base excision repair of DNA damaged by oxidation or by mutagenic agents. Acts as a DNA glycosylase that recognizes and removes damaged bases. Has a preference for oxidized purines, such as 7,8-dihydro-8-oxoguanine (8-oxoG). Has AP (apurinic/apyrimidinic) lyase activity and introduces nicks in the DNA strand. Cleaves the DNA backbone by beta-delta elimination to generate a single-strand break at the site of the removed base with both 3'- and 5'-phosphates. The protein is Formamidopyrimidine-DNA glycosylase of Lactiplantibacillus plantarum (strain ATCC BAA-793 / NCIMB 8826 / WCFS1) (Lactobacillus plantarum).